We begin with the raw amino-acid sequence, 101 residues long: MAAPLSVEVEFGGGAELLFDGVKKHQVTLPGQEEPWDIRSLLVWIKKNLLKERPELFIQGDSVRPGILVLVNDADWELLGELDYQLQDQDSVLFISTLHGG.

Gly101 carries the post-translational modification 1-thioglycine. Gly101 is covalently cross-linked (Glycyl lysine isopeptide (Gly-Lys) (interchain with K-? in acceptor proteins)).

Belongs to the URM1 family. Component of a complex at least composed of URM1, CTU2/NCS2 and CTU1/ATPBD3. Post-translationally, C-terminal thiocarboxylation occurs in 2 steps, it is first acyl-adenylated (-COAMP) via the hesA/moeB/thiF part of MOCS3, then thiocarboxylated (-COSH) via the rhodanese domain of MOCS3.

It is found in the cytoplasm. It functions in the pathway tRNA modification; 5-methoxycarbonylmethyl-2-thiouridine-tRNA biosynthesis. Functionally, acts as a sulfur carrier required for 2-thiolation of mcm(5)S(2)U at tRNA wobble positions of cytosolic tRNA(Lys), tRNA(Glu) and tRNA(Gln). Serves as sulfur donor in tRNA 2-thiolation reaction by being thiocarboxylated (-COSH) at its C-terminus by MOCS3. The sulfur is then transferred to tRNA to form 2-thiolation of mcm(5)S(2)U. Also acts as a ubiquitin-like protein (UBL) that is covalently conjugated via an isopeptide bond to lysine residues of target proteins such as MOCS3, ATPBD3, CTU2, USP15 and CAS. The thiocarboxylated form serves as substrate for conjugation and oxidative stress specifically induces the formation of UBL-protein conjugates. This chain is Ubiquitin-related modifier 1, found in Bos taurus (Bovine).